Here is a 394-residue protein sequence, read N- to C-terminus: 1-deoxy-D-xylulose 5-phosphate reductoisomerase (394 aa).

The NADPH site is built by T12, G13, S14, I15, K39, Q40, and N126. Residue K127 participates in 1-deoxy-D-xylulose 5-phosphate binding. E128 serves as a coordination point for NADPH. Residue D152 coordinates Mn(2+). 1-deoxy-D-xylulose 5-phosphate is bound by residues S153, E154, S183, and H206. Position 154 (E154) interacts with Mn(2+). G212 is an NADPH binding site. Residues S219, N224, K225, and E228 each contribute to the 1-deoxy-D-xylulose 5-phosphate site. E228 is a binding site for Mn(2+).

The protein belongs to the DXR family. The cofactor is Mg(2+). Mn(2+) is required as a cofactor.

It catalyses the reaction 2-C-methyl-D-erythritol 4-phosphate + NADP(+) = 1-deoxy-D-xylulose 5-phosphate + NADPH + H(+). Its pathway is isoprenoid biosynthesis; isopentenyl diphosphate biosynthesis via DXP pathway; isopentenyl diphosphate from 1-deoxy-D-xylulose 5-phosphate: step 1/6. Its function is as follows. Catalyzes the NADPH-dependent rearrangement and reduction of 1-deoxy-D-xylulose-5-phosphate (DXP) to 2-C-methyl-D-erythritol 4-phosphate (MEP). The sequence is that of 1-deoxy-D-xylulose 5-phosphate reductoisomerase from Neisseria meningitidis serogroup B (strain ATCC BAA-335 / MC58).